The chain runs to 446 residues: Mitochondrial ribonuclease P protein 1 homolog (446 aa).

A mitochondrion-targeting transit peptide spans 1–24 (MLKHFARWRLGSQLLKGCAAPVRQ). Positions 41–67 (PQKKFVNPFSQPAPALSNDTISENKEE) are disordered. A phosphoserine mark is found at S50 and S57. Residue T60 is modified to Phosphothreonine. S62 carries the phosphoserine modification. The stretch at 119 to 158 (LWQIEMKKEADQRKKAERAKEAERRVAEMRKEREENTHII) forms a coiled coil. Residues 179 to 373 (QNNRLTRAMQ…KHVPRRKVVQ (195 aa)) enclose the SAM-dependent MTase TRM10-type domain.

Belongs to the class IV-like SAM-binding methyltransferase superfamily. TRM10 family. Component of mitochondrial ribonuclease P, a complex composed of rswl/MRPP1, scu/MRPP2 and mldr/MRPP3.

It is found in the mitochondrion. Mitochondrial tRNA N1-methyltransferase involved in mitochondrial tRNA maturation. Component of mitochondrial ribonuclease P, a complex composed of rswl/MRPP1, scu/MRPP2 and mldr/MRPP3., which cleaves tRNA molecules in their 5'-ends. Essential for the structural and functional integrity of mitochondria. Function is essential for pupal development. This Drosophila melanogaster (Fruit fly) protein is Mitochondrial ribonuclease P protein 1 homolog.